The sequence spans 190 residues: CASP-like protein 1E2 (190 aa).

A compositionally biased stretch (low complexity) spans 1 to 12 (MENEGKNNMNGM). A disordered region spans residues 1 to 24 (MENEGKNNMNGMEMEKGKRESRSR). At 1-28 (MENEGKNNMNGMEMEKGKRESRSRKGVE) the chain is on the cytoplasmic side. The span at 13–24 (EMEKGKRESRSR) shows a compositional bias: basic and acidic residues. Residues 29-49 (LTMRVLALVLTMAAATVLGVA) traverse the membrane as a helical segment. The Extracellular portion of the chain corresponds to 50–83 (KQTKVVSIKLIPALPPLDITTTAKASYLSAFVYN). A helical transmembrane segment spans residues 84–104 (ISANAIACGYTAISIAILMIS). The Cytoplasmic portion of the chain corresponds to 105 to 111 (RGRRSKK). A helical membrane pass occupies residues 112 to 132 (LLMAVLLGDLVMVALLFSGTG). The Extracellular portion of the chain corresponds to 133 to 163 (AASAIGLMGLQGNKHVMWNKVCGVFGKFCHR). The chain crosses the membrane as a helical span at residues 164–184 (AAPSLPLTFLAAVVFMFLVVL). At 185–190 (DAIKLP) the chain is on the cytoplasmic side.

The protein belongs to the Casparian strip membrane proteins (CASP) family. Homodimer and heterodimers.

It is found in the cell membrane. The chain is CASP-like protein 1E2 from Arabidopsis lyrata subsp. lyrata (Lyre-leaved rock-cress).